Reading from the N-terminus, the 476-residue chain is uncharacterized protein (476 aa).

The next 10 membrane-spanning stretches (helical) occupy residues 4 to 24 (FFSFINSVLWGSVMIYLLFGA), 81 to 101 (ALAITAGGPGAVFWMWVAAFI), 141 to 161 (WMGVLFAVFLLIAYGIIFSGV), 174 to 194 (FDFPPLVTGIILAVFTLLAIT), 207 to 227 (FVPLMAIIWVLTSLVICVMNI), 233 to 253 (VIWSIFESAFGWQEAAGGAAG), 300 to 320 (MIGIFIDTLVICTASAMLILL), 351 to 371 (FVTLVVILFAFSSIVANYIYA), 391 to 411 (ICTFATVIGGTLLSLPLMWQL), and 414 to 434 (IIMACMAITNLTAILLLSPVV).

The protein belongs to the alanine or glycine:cation symporter (AGCS) (TC 2.A.25) family.

It localises to the cell inner membrane. This is an uncharacterized protein from Escherichia coli (strain K12).